We begin with the raw amino-acid sequence, 442 residues long: DNA topoisomerase 6 subunit A3 (442 aa).

The tract at residues 1-34 (MSEKKRRGGAGAGAASGSASKKPRVSTAASYAES) is disordered. Positions 91–224 (QDSASVTSRI…LHVVASEKGV (134 aa)) constitute a Topo IIA-type catalytic domain. Tyrosine 185 functions as the O-(5'-phospho-DNA)-tyrosine intermediate in the catalytic mechanism. 2 residues coordinate Mg(2+): glutamate 271 and aspartate 323.

Belongs to the TOP6A family. Homodimer. Heterotetramer of two TOP6A and two TOP6B subunits. Interacts with TOP6B. Mg(2+) serves as cofactor. As to expression, highly expressed in flowers before pollination. Expressed in roots and shoots.

The protein localises to the nucleus. The catalysed reaction is ATP-dependent breakage, passage and rejoining of double-stranded DNA.. Functionally, component of the DNA topoisomerase VI involved in chromatin organization and progression of endoreduplication cycles. Relaxes both positive and negative superturns and exhibits a strong decatenase activity. May be involved in cell proliferation and stress tolerance. This is DNA topoisomerase 6 subunit A3 from Oryza sativa subsp. indica (Rice).